Reading from the N-terminus, the 183-residue chain is MASELDNLPVITTRREEAQGFLQGLVSKGLGWARKYSLFQYPFVTACCGMEFMTVASARYDLDRFGAALPRFSPRQADLLIVVGTVNCKQAPILRRVYEQIAEPKWVVAFGVCASSGGFYDNYATVQGIDRIVPVDVYIPGCPPRPEQVLDGIMLLQQKIQGQQHKLIDRKPLPVVGQEPISR.

The [4Fe-4S] cluster site is built by Cys47, Cys48, Cys113, and Cys142.

Belongs to the complex I 20 kDa subunit family. As to quaternary structure, NDH-1 is composed of 14 different subunits. Subunits NuoB, C, D, E, F, and G constitute the peripheral sector of the complex. The cofactor is [4Fe-4S] cluster.

The protein localises to the cell inner membrane. It carries out the reaction a quinone + NADH + 5 H(+)(in) = a quinol + NAD(+) + 4 H(+)(out). Functionally, NDH-1 shuttles electrons from NADH, via FMN and iron-sulfur (Fe-S) centers, to quinones in the respiratory chain. The immediate electron acceptor for the enzyme in this species is believed to be ubiquinone. Couples the redox reaction to proton translocation (for every two electrons transferred, four hydrogen ions are translocated across the cytoplasmic membrane), and thus conserves the redox energy in a proton gradient. The protein is NADH-quinone oxidoreductase subunit B 2 of Anaeromyxobacter sp. (strain Fw109-5).